The sequence spans 613 residues: Isocitrate dehydrogenase kinase/phosphatase (613 aa).

Residues alanine 328–leucine 334 and lysine 349 contribute to the ATP site. Aspartate 384 is an active-site residue.

The protein belongs to the AceK family.

The protein resides in the cytoplasm. The catalysed reaction is L-seryl-[isocitrate dehydrogenase] + ATP = O-phospho-L-seryl-[isocitrate dehydrogenase] + ADP + H(+). Its function is as follows. Bifunctional enzyme which can phosphorylate or dephosphorylate isocitrate dehydrogenase (IDH) on a specific serine residue. This is a regulatory mechanism which enables bacteria to bypass the Krebs cycle via the glyoxylate shunt in response to the source of carbon. When bacteria are grown on glucose, IDH is fully active and unphosphorylated, but when grown on acetate or ethanol, the activity of IDH declines drastically concomitant with its phosphorylation. The sequence is that of Isocitrate dehydrogenase kinase/phosphatase from Cupriavidus necator (strain ATCC 17699 / DSM 428 / KCTC 22496 / NCIMB 10442 / H16 / Stanier 337) (Ralstonia eutropha).